We begin with the raw amino-acid sequence, 445 residues long: Glutamate--tRNA ligase 2 (445 aa).

The 'HIGH' region motif lies at 10–20 (PSPTGRLHVGN). The short motif at 241-245 (ALSKR) is the 'KMSKS' region element. Lys-244 contacts ATP.

Belongs to the class-I aminoacyl-tRNA synthetase family. Glutamate--tRNA ligase type 1 subfamily. As to quaternary structure, monomer.

Its subcellular location is the cytoplasm. The enzyme catalyses tRNA(Glu) + L-glutamate + ATP = L-glutamyl-tRNA(Glu) + AMP + diphosphate. In terms of biological role, catalyzes the attachment of glutamate to tRNA(Glu) in a two-step reaction: glutamate is first activated by ATP to form Glu-AMP and then transferred to the acceptor end of tRNA(Glu). The protein is Glutamate--tRNA ligase 2 of Hyphomonas neptunium (strain ATCC 15444).